The primary structure comprises 468 residues: Probable citrate synthase, mitochondrial (468 aa).

Residues His-303, His-349, and Asp-404 contribute to the active site.

It belongs to the citrate synthase family. Homodimer.

Its subcellular location is the mitochondrion matrix. It catalyses the reaction oxaloacetate + acetyl-CoA + H2O = citrate + CoA + H(+). The protein operates within carbohydrate metabolism; tricarboxylic acid cycle; isocitrate from oxaloacetate: step 1/2. This chain is Probable citrate synthase, mitochondrial (cts-1), found in Caenorhabditis briggsae.